Consider the following 290-residue polypeptide: Eukaryotic translation initiation factor 3 subunit F-2 (290 aa).

One can recognise an MPN domain in the interval 12–150 (VRLQPLVLFQ…TRLYCAVTMG (139 aa)).

This sequence belongs to the eIF-3 subunit F family. In terms of assembly, component of the eukaryotic translation initiation factor 3 (eIF-3) complex. The eIF-3 complex interacts with pix.

The protein resides in the cytoplasm. Functionally, component of the eukaryotic translation initiation factor 3 (eIF-3) complex, which is involved in protein synthesis of a specialized repertoire of mRNAs and, together with other initiation factors, stimulates binding of mRNA and methionyl-tRNAi to the 40S ribosome. The eIF-3 complex specifically targets and initiates translation of a subset of mRNAs involved in cell proliferation. The polypeptide is Eukaryotic translation initiation factor 3 subunit F-2 (Drosophila mojavensis (Fruit fly)).